The following is a 114-amino-acid chain: PDZK1-interacting protein 1 (114 aa).

Residues 1–28 (MSVLSLVVLSLLMALPPASCQQGRGNLQ) are Extracellular-facing. The chain crosses the membrane as a helical span at residues 29-51 (PWMQGLIAVAVFLVLVAIAFAVN). Over 52–114 (HFWCQEKPAP…EEGKVCSTPM (63 aa)) the chain is Cytoplasmic. Ser-85 carries the phosphoserine modification.

Belongs to the PDZK1-interacting protein 1/SMIM24 family. Forms a heterodimer (via N-terminal transmembrane helix) with SLC5A2/SGLT2 (via TM13); this interaction enhances SLC5A2 transporter activity. Interacts with PDZK1.

Its subcellular location is the apical cell membrane. In terms of biological role, auxiliary protein of electrogenic Na(+)-coupled sugar symporter SLC5A2/SGLT2 and SLC5A1/SGLT1. Essential for the transporter activity of SLC5A2/SGLT2 but not SLC5A1/SGLT1. The polypeptide is PDZK1-interacting protein 1 (Bos taurus (Bovine)).